The following is a 365-amino-acid chain: tRNA/tmRNA (uracil-C(5))-methyltransferase (365 aa).

Residues Gln189, Tyr217, Asn222, Glu238, and Asp298 each contribute to the S-adenosyl-L-methionine site. The active-site Nucleophile is the Cys323. Residue Glu357 is the Proton acceptor of the active site.

It belongs to the class I-like SAM-binding methyltransferase superfamily. RNA M5U methyltransferase family. TrmA subfamily.

It catalyses the reaction uridine(54) in tRNA + S-adenosyl-L-methionine = 5-methyluridine(54) in tRNA + S-adenosyl-L-homocysteine + H(+). It carries out the reaction uridine(341) in tmRNA + S-adenosyl-L-methionine = 5-methyluridine(341) in tmRNA + S-adenosyl-L-homocysteine + H(+). Its function is as follows. Dual-specificity methyltransferase that catalyzes the formation of 5-methyluridine at position 54 (m5U54) in all tRNAs, and that of position 341 (m5U341) in tmRNA (transfer-mRNA). In Shewanella sp. (strain ANA-3), this protein is tRNA/tmRNA (uracil-C(5))-methyltransferase.